Here is a 360-residue protein sequence, read N- to C-terminus: Phenylalanine--tRNA ligase alpha subunit (360 aa).

Glu-260 contributes to the Mg(2+) binding site.

This sequence belongs to the class-II aminoacyl-tRNA synthetase family. Phe-tRNA synthetase alpha subunit type 1 subfamily. Tetramer of two alpha and two beta subunits. It depends on Mg(2+) as a cofactor.

Its subcellular location is the cytoplasm. It carries out the reaction tRNA(Phe) + L-phenylalanine + ATP = L-phenylalanyl-tRNA(Phe) + AMP + diphosphate + H(+). This Paracoccus denitrificans (strain Pd 1222) protein is Phenylalanine--tRNA ligase alpha subunit.